A 282-amino-acid chain; its full sequence is Ribosome biogenesis GTPase A (282 aa).

A CP-type G domain is found at 14–178; that stretch reads RREVTEKLKL…LLDTPGILWP (165 aa). GTP is bound by residues 58–61, 86–87, 130–135, and Gly174; these read NKAD, NS, and NVGKST.

Belongs to the TRAFAC class YlqF/YawG GTPase family. MTG1 subfamily. As to quaternary structure, interacts with ctc. Interacts with the immature 50S ribosome subunit. 2 molecules of rbgA bind to one 50S subunit.

Its subcellular location is the cytoplasm. Functionally, essential protein that is required for a late step of 50S ribosomal subunit assembly. Has GTPase activity that is stimulated by interaction with the immature 50S ribosome subunit. Binds to the 23S rRNA. Required for the association of ribosomal proteins rplP and rpmA with the large subunit. This Bacillus spizizenii (strain ATCC 23059 / NRRL B-14472 / W23) (Bacillus subtilis subsp. spizizenii) protein is Ribosome biogenesis GTPase A (rbgA).